Here is a 332-residue protein sequence, read N- to C-terminus: Putative threonine dehydratase (332 aa).

Lys56 bears the N6-(pyridoxal phosphate)lysine mark.

It belongs to the serine/threonine dehydratase family. Pyridoxal 5'-phosphate is required as a cofactor.

It catalyses the reaction L-threonine = 2-oxobutanoate + NH4(+). It functions in the pathway amino-acid biosynthesis; L-isoleucine biosynthesis; 2-oxobutanoate from L-threonine: step 1/1. This is Putative threonine dehydratase from Sinorhizobium fredii (strain NBRC 101917 / NGR234).